Here is a 314-residue protein sequence, read N- to C-terminus: uncharacterized protein (314 aa).

Basic and acidic residues predominate over residues 68–91 (EKKKKSSSFEKRDKRRVQLKEKSP). Disordered stretches follow at residues 68-97 (EKKKKSSSFEKRDKRRVQLKEKSPLRTPRN) and 141-164 (MDVQSPSTMSTSKNNVRNAERPAS). Polar residues predominate over residues 144–157 (QSPSTMSTSKNNVR).

The protein localises to the mitochondrion. This is an uncharacterized protein from Schizosaccharomyces pombe (strain 972 / ATCC 24843) (Fission yeast).